A 439-amino-acid polypeptide reads, in one-letter code: CBL-interacting serine/threonine-protein kinase 26 (439 aa).

One can recognise a Protein kinase domain in the interval 13-268 (YEVGKTLGQG…IPEVLGDAWF (256 aa)). Residues 19-27 (LGQGTFAKV) and K42 contribute to the ATP site. D136 (proton acceptor) is an active-site residue. Residues 154–183 (DFGLSALSRQVRGDGLLHTACGTPNYAAPE) form an activation loop region. S158 carries the phosphoserine modification. The residue at position 172 (T172) is a Phosphothreonine. The NAF domain maps to 306 to 330 (EQPTSMNAFELISMSRALDLGNLFE). Positions 336-365 (KRETRFAAKGAANDLVQKIEEASKPLGFDI) are PPI.

Belongs to the protein kinase superfamily. CAMK Ser/Thr protein kinase family. SNF1 subfamily. Interacts with RBOHF (via N-terminus). Requires Mn(2+) as cofactor.

It localises to the cell membrane. It catalyses the reaction L-seryl-[protein] + ATP = O-phospho-L-seryl-[protein] + ADP + H(+). The catalysed reaction is L-threonyl-[protein] + ATP = O-phospho-L-threonyl-[protein] + ADP + H(+). Functionally, CIPK serine-threonine protein kinases interact with CBL proteins. Binding of a CBL protein to the regulatory NAF domain of CIPK protein lead to the activation of the kinase in a calcium-dependent manner. Involved in the calcium-dependent regulation of reactive oxygen species production by the NADPH oxidase RBOHF. The sequence is that of CBL-interacting serine/threonine-protein kinase 26 (CIPK26) from Arabidopsis thaliana (Mouse-ear cress).